Consider the following 349-residue polypeptide: Paired box protein Pax-4 (349 aa).

The paired DNA-binding region spans 5–131; the sequence is GLSSVNQLGG…SSINRVLRAL (127 aa). The interval 8–64 is PAI subdomain; that stretch reads SVNQLGGLFVNGRPLPLDTRQQIVQLAIRGMRPCDISRSLKVSNGCVSKILGRYYRT. The segment at 83–131 is RED subdomain; the sequence is AVVARIAQLKDEYPALFAWEIQHQLCTEGLCTQDKAPSVSSINRVLRAL. Residues 170 to 229 constitute a DNA-binding region (homeobox); sequence SHRNRTIFSPGQAEALEKEFQRGQYPDSVARGKLAAATSLPEDTVRVWFSNRRAKWRRQE. The tract at residues 278–349 is transcription repression; it reads FCQLCCGTAP…VPSTHCSNWP (72 aa).

The protein belongs to the paired homeobox family. In terms of tissue distribution, expressed in early pancreas. Later restricted to beta cells. Undetectable in adult islets.

The protein localises to the nucleus. In terms of biological role, plays an important role in the differentiation and development of pancreatic islet beta cells. Transcriptional repressor that competes with PAX6 in binding to a common element in the glucagon, insulin and somatostatin promoters. In Mus musculus (Mouse), this protein is Paired box protein Pax-4 (Pax4).